The primary structure comprises 334 residues: snRNA-activating protein complex subunit 2 (334 aa).

Disordered stretches follow at residues 137-200 (LHSK…STEE) and 271-306 (AGGS…ELKS). Residues 167–180 (IPSSAPAAPSSAPR) are compositionally biased toward low complexity.

As to quaternary structure, part of the SNAPc complex composed of 5 subunits: SNAPC1, SNAPC2, SNAPC3, SNAPC4 and SNAPC5. SNAPC2 interacts with TBP and SNAPC4.

It is found in the nucleus. In terms of biological role, part of the SNAPc complex required for the transcription of both RNA polymerase II and III small-nuclear RNA genes. Binds to the proximal sequence element (PSE), a non-TATA-box basal promoter element common to these 2 types of genes. Recruits TBP and BRF2 to the U6 snRNA TATA box. The polypeptide is snRNA-activating protein complex subunit 2 (SNAPC2) (Homo sapiens (Human)).